Consider the following 78-residue polypeptide: Protein SlyX homolog (78 aa).

The protein belongs to the SlyX family.

In Xanthomonas euvesicatoria pv. vesicatoria (strain 85-10) (Xanthomonas campestris pv. vesicatoria), this protein is Protein SlyX homolog.